The following is an 81-amino-acid chain: Small ribosomal subunit protein bS16 (81 aa).

The protein belongs to the bacterial ribosomal protein bS16 family.

The sequence is that of Small ribosomal subunit protein bS16 from Teredinibacter turnerae (strain ATCC 39867 / T7901).